The sequence spans 429 residues: UDP-N-acetylglucosamine 1-carboxyvinyltransferase (429 aa).

22 to 23 (KN) provides a ligand contact to phosphoenolpyruvate. R102 contributes to the UDP-N-acetyl-alpha-D-glucosamine binding site. Residue C126 is the Proton donor of the active site. C126 carries the 2-(S-cysteinyl)pyruvic acid O-phosphothioketal modification. UDP-N-acetyl-alpha-D-glucosamine-binding positions include 131 to 135 (RPVDL), 171 to 174 (KVSV), D316, and I338.

The protein belongs to the EPSP synthase family. MurA subfamily.

It is found in the cytoplasm. The catalysed reaction is phosphoenolpyruvate + UDP-N-acetyl-alpha-D-glucosamine = UDP-N-acetyl-3-O-(1-carboxyvinyl)-alpha-D-glucosamine + phosphate. It participates in cell wall biogenesis; peptidoglycan biosynthesis. In terms of biological role, cell wall formation. Adds enolpyruvyl to UDP-N-acetylglucosamine. This is UDP-N-acetylglucosamine 1-carboxyvinyltransferase from Brucella abortus (strain S19).